The chain runs to 690 residues: Protein arginine N-methyltransferase 7 (690 aa).

SAM-dependent MTase PRMT-type domains lie at 14 to 357 and 366 to 690; these read QNSW…YSLW and TKSV…QKKL.

Belongs to the class I-like SAM-binding methyltransferase superfamily. Protein arginine N-methyltransferase family. PRMT7 subfamily.

Its function is as follows. Essential arginine methyltransferase that can both catalyze the formation of omega-N monomethylarginine (MMA) and symmetrical dimethylarginine (sDMA). Specifically mediates the symmetrical dimethylation of arginine residues in the small nuclear ribonucleoproteins SmD1 and SmD3. This is Protein arginine N-methyltransferase 7 (Art7) from Drosophila sechellia (Fruit fly).